The following is a 206-amino-acid chain: dITP/XTP pyrophosphatase (206 aa).

Residue 7 to 12 (SRNPKK) coordinates substrate. Asp72 serves as the catalytic Proton acceptor. Asp72 serves as a coordination point for Mg(2+). Substrate is bound by residues Ser73, 155-158 (FGYD), Lys178, and 183-184 (HR).

It belongs to the HAM1 NTPase family. Homodimer. Mg(2+) serves as cofactor.

It catalyses the reaction XTP + H2O = XMP + diphosphate + H(+). The enzyme catalyses dITP + H2O = dIMP + diphosphate + H(+). It carries out the reaction ITP + H2O = IMP + diphosphate + H(+). Its function is as follows. Pyrophosphatase that catalyzes the hydrolysis of nucleoside triphosphates to their monophosphate derivatives, with a high preference for the non-canonical purine nucleotides XTP (xanthosine triphosphate), dITP (deoxyinosine triphosphate) and ITP. Seems to function as a house-cleaning enzyme that removes non-canonical purine nucleotides from the nucleotide pool, thus preventing their incorporation into DNA/RNA and avoiding chromosomal lesions. This chain is dITP/XTP pyrophosphatase, found in Mycobacteroides abscessus (strain ATCC 19977 / DSM 44196 / CCUG 20993 / CIP 104536 / JCM 13569 / NCTC 13031 / TMC 1543 / L948) (Mycobacterium abscessus).